The sequence spans 391 residues: Cell cycle checkpoint control protein RAD9A (391 aa).

The residue at position 28 (tyrosine 28) is a Phosphotyrosine. Residues 51-91 (FLFAPLFFQQYQAATPGQDLLRCKILMKSFLSVFRSLAMLE) are possesses 3'-5' exonuclease activity. A sufficient for interaction with ABL1 region spans residues 266 to 391 (SDTDSHSQDL…VLAEDSEGEG (126 aa)). Basic and acidic residues predominate over residues 268 to 282 (TDSHSQDLGSPERHQ). Disordered stretches follow at residues 268–301 (TDSH…FAND) and 319–391 (SRVL…EGEG). Phosphoserine is present on residues serine 272, serine 277, and serine 328. Serine 341 bears the Phosphoserine; by CK2 mark. Residues serine 375 and serine 380 each carry the phosphoserine modification. Serine 387 carries the phosphoserine; by CK2 modification.

This sequence belongs to the rad9 family. As to quaternary structure, component of the toroidal 9-1-1 (RAD9-RAD1-HUS1) complex, composed of RAD9A, RAD1 and HUS1. The 9-1-1 complex associates with LIG1, POLB, FEN1, RAD17, HDAC1, RPA1 and RPA2. The 9-1-1 complex associates with the RAD17-RFC complex. RAD9A interacts with BCL2L1, FEN1, RAD9B, ABL1, RPA1, ATAD5 and RPA2. Interacts with DNAJC7. Interacts (when phosphorylated) with TOPBP1. Constitutively phosphorylated on serine and threonine amino acids in absence of DNA damage. Hyperphosphorylated by PRKCD and ABL1 upon DNA damage. Its phosphorylation by PRKCD may be required for the formation of the 9-1-1 complex. Phosphorylated at Ser-341 and Ser-387 by CK2, promoting interaction with TOPBP1.

Its subcellular location is the nucleus. It carries out the reaction Exonucleolytic cleavage in the 3'- to 5'-direction to yield nucleoside 5'-phosphates.. In terms of biological role, component of the 9-1-1 cell-cycle checkpoint response complex that plays a major role in DNA repair. The 9-1-1 complex is recruited to DNA lesion upon damage by the RAD17-replication factor C (RFC) clamp loader complex. Acts then as a sliding clamp platform on DNA for several proteins involved in long-patch base excision repair (LP-BER). The 9-1-1 complex stimulates DNA polymerase beta (POLB) activity by increasing its affinity for the 3'-OH end of the primer-template and stabilizes POLB to those sites where LP-BER proceeds; endonuclease FEN1 cleavage activity on substrates with double, nick, or gap flaps of distinct sequences and lengths; and DNA ligase I (LIG1) on long-patch base excision repair substrates. The 9-1-1 complex is necessary for the recruitment of RHNO1 to sites of double-stranded breaks (DSB) occurring during the S phase. RAD9A possesses 3'-&gt;5' double stranded DNA exonuclease activity. In Homo sapiens (Human), this protein is Cell cycle checkpoint control protein RAD9A (RAD9A).